The primary structure comprises 707 residues: Polyribonucleotide nucleotidyltransferase (707 aa).

Residues D486 and D492 each contribute to the Mg(2+) site. In terms of domain architecture, KH spans P553–I612. One can recognise an S1 motif domain in the interval G622–K690.

This sequence belongs to the polyribonucleotide nucleotidyltransferase family. As to quaternary structure, component of the RNA degradosome, which is a multiprotein complex involved in RNA processing and mRNA degradation. The cofactor is Mg(2+).

The protein localises to the cytoplasm. The enzyme catalyses RNA(n+1) + phosphate = RNA(n) + a ribonucleoside 5'-diphosphate. In terms of biological role, involved in mRNA degradation. Catalyzes the phosphorolysis of single-stranded polyribonucleotides processively in the 3'- to 5'-direction. This chain is Polyribonucleotide nucleotidyltransferase, found in Buchnera aphidicola subsp. Acyrthosiphon pisum (strain 5A).